The primary structure comprises 559 residues: Urocanate hydratase (559 aa).

NAD(+) contacts are provided by residues 54–55 (GG), glutamine 132, 178–180 (GMG), glutamate 198, arginine 203, 244–245 (NA), 265–269 (QTSAH), 275–276 (YL), and tyrosine 324. Residue cysteine 412 is part of the active site. Glycine 494 is an NAD(+) binding site.

This sequence belongs to the urocanase family. It depends on NAD(+) as a cofactor.

Its subcellular location is the cytoplasm. It catalyses the reaction 4-imidazolone-5-propanoate = trans-urocanate + H2O. It participates in amino-acid degradation; L-histidine degradation into L-glutamate; N-formimidoyl-L-glutamate from L-histidine: step 2/3. Functionally, catalyzes the conversion of urocanate to 4-imidazolone-5-propionate. The polypeptide is Urocanate hydratase (Azotobacter vinelandii (strain DJ / ATCC BAA-1303)).